We begin with the raw amino-acid sequence, 147 residues long: Large ribosomal subunit protein uL13 (147 aa).

This sequence belongs to the universal ribosomal protein uL13 family. As to quaternary structure, part of the 50S ribosomal subunit.

Functionally, this protein is one of the early assembly proteins of the 50S ribosomal subunit, although it is not seen to bind rRNA by itself. It is important during the early stages of 50S assembly. The chain is Large ribosomal subunit protein uL13 from Mycolicibacterium smegmatis (strain ATCC 700084 / mc(2)155) (Mycobacterium smegmatis).